Reading from the N-terminus, the 297-residue chain is MSELQSQPKKIAVVTGASGGIGYEVTKELARNGYLVYACARRLEPMAQLAIQFGNDSIKPYKLDISKPEEIVTFSGFLRANLPDGKLDLLYNNAGQSCTFPALDATDAAVEQCFKVNVFGHINMCRELSEFLIKAKGTIVFTGSLAGVVSFPFGSIYSASKAAIHQYARGLHLEMKPFNVRVINAITGGVATDIADKRPLPETSIYNFPEGREAFNSRKTMAKDNKPMPADAYAKQLVKDILSTSDPVDVYRGTFANIMRFVMIFVPYWLLEKGLSKKFKLDKVNNALKSKQKNKDD.

Positions 16–20 match the GXSXG motif; it reads GASGG. Residue S18 is the Nucleophile; for lipase activity of the active site. The NADP(+) site is built by I21, D64, N93, R126, Y157, K161, V190, and T192. Residue Y157 is the Proton acceptor of the active site. K161 (lowers pKa of active site Tyr) is an active-site residue.

Belongs to the short-chain dehydrogenases/reductases (SDR) family.

Its subcellular location is the lipid droplet. It localises to the mitochondrion outer membrane. It is found in the endoplasmic reticulum. The catalysed reaction is a 1-acylglycerone 3-phosphate + NADPH + H(+) = a 1-acyl-sn-glycero-3-phosphate + NADP(+). The enzyme catalyses 1-hexadecanoyl-sn-glycero-3-phosphate + NADP(+) = 1-hexadecanoylglycerone 3-phosphate + NADPH + H(+). It catalyses the reaction a triacylglycerol + H2O = a diacylglycerol + a fatty acid + H(+). It carries out the reaction 1,2,3-tri-(9Z-octadecenoyl)-glycerol + H2O = di-(9Z)-octadecenoylglycerol + (9Z)-octadecenoate + H(+). Its activity is regulated as follows. Inhibited by divalent cations and N-ethylmaleimide. Activity is reduced under anaerobic growth conditions. Functionally, can convert acyl and alkyl dihydroxyacetone-phosphate (DHAP) into glycerolipids and ether lipids, respectively. Required for the biosynthesis of phosphatidic acid via the DHAP pathway, where it reduces 1-acyl DHAP to lysophosphatidic acid (LPA). Also has triacylglycerol (TAG) lipase activity. Involved in the mobilization of the non-polar storage lipids triacylglycerols (TAGs) from lipid particles by hydrolysis of TAGs. Required for spore germination. Plays a role in cell wall biogenesis, but this effect may be indirect by affecting the activities of cell wall synthesis enzymes. Lipolysis of TAG by AYR1 is essential for starvation-induced autophagy. Forms an NADPH-regulated cation-selective channel in the mitochondrial outer membrane. The sequence is that of NADPH-dependent 1-acyldihydroxyacetone phosphate reductase from Saccharomyces cerevisiae (strain ATCC 204508 / S288c) (Baker's yeast).